The chain runs to 309 residues: D-alanine--D-alanine ligase (309 aa).

The 200-residue stretch at lysine 105–alanine 304 folds into the ATP-grasp domain. Leucine 135–threonine 190 contacts ATP. 3 residues coordinate Mg(2+): aspartate 258, glutamate 271, and asparagine 273.

It belongs to the D-alanine--D-alanine ligase family. Mg(2+) serves as cofactor. Requires Mn(2+) as cofactor.

It is found in the cytoplasm. The catalysed reaction is 2 D-alanine + ATP = D-alanyl-D-alanine + ADP + phosphate + H(+). It functions in the pathway cell wall biogenesis; peptidoglycan biosynthesis. Cell wall formation. The protein is D-alanine--D-alanine ligase of Idiomarina loihiensis (strain ATCC BAA-735 / DSM 15497 / L2-TR).